The sequence spans 2310 residues: Retinal-specific phospholipid-transporting ATPase ABCA4 (2310 aa).

Topologically, residues 1–21 (MGFLRQIQLLLWKNWTLRKRQ) are cytoplasmic. A helical transmembrane segment spans residues 22–42 (KIRFVVELVWPLSLFLVLIWL). Residues 43–646 (RNANPLYSQH…MPYPCFVDDS (604 aa)) are Extracellular-facing. 2 cysteine pairs are disulfide-bonded: Cys54-Cys81 and Cys75-Cys324. Asn98 is a glycosylation site (N-linked (GlcNAc...) asparagine). Residues Ser336 and Asn338 each coordinate Mg(2+). A disulfide bridge connects residues Cys370 and Cys519. N-linked (GlcNAc...) asparagine glycans are attached at residues Asn415 and Asn504. Residues Arg587 and Arg653 each contribute to the an N-all-trans-retinylidenephosphatidylethanolamine site. Disulfide bonds link Cys641-Cys1489, Cys1443-Cys1454, and Cys1487-Cys1501. A helical transmembrane segment spans residues 647–667 (FMIILNRCFPIFMVLAWIYSV). The Cytoplasmic segment spans residues 668-699 (SMTVKGIVLEKELRLKETLKNQGVSNAVIWCT). Residues 700 to 720 (WFLDSFSIMALSIFLLTLFIM) traverse the membrane as a helical segment. The Extracellular portion of the chain corresponds to 721 to 730 (HGRILHYSDP). The chain crosses the membrane as a helical span at residues 731–751 (FILFLFLLAFATATIMQSFLL). Residues 752–759 (STLFSKAS) lie on the Cytoplasmic side of the membrane. Residues 760–780 (LAAACSGVIYFTLYLPHVLCF) traverse the membrane as a helical segment. At 781-835 (AWQDRMTADLKTTVSLLSSVAFGFGTEYLVRFEEQGLGLQWSNIGKSPLEGDEFS) the chain is on the extracellular side. Residues 836–856 (FLLSMKMMLLDAALYGLLAWY) traverse the membrane as a helical segment. The Cytoplasmic portion of the chain corresponds to 857 to 1375 (LDQVFPGDYG…IRSRKDFVAQ (519 aa)). The disordered stretch occupies residues 891–910 (ERALEKTEPLTEEMEDPEHP). Thr901 is modified (phosphothreonine). An ABC transporter 1 domain is found at 929–1160 (VCVKNLVKVF…FGTGFYLTLV (232 aa)). Residues Phe938, Gly966, and Lys969 each coordinate ATP. Thr970 contacts Mg(2+). 6 residues coordinate ATP: Thr971, Gln1010, Lys1054, Gly1064, Gly1065, and His1118. Position 1185 is a phosphoserine (Ser1185). Residues 1311–1344 (RQYAQAPHTCSPGQVDPPKGQPSPEPEDPGVPFN) are disordered. The helical transmembrane segment at 1376–1396 (IVLPATFVFLALMLSIIVPPF) threads the bilayer. The Extracellular portion of the chain corresponds to 1397-1726 (GEFPALTLHP…VSPTTYWLTN (330 aa)). Asn1468 is a glycosylation site (N-linked (GlcNAc...) asparagine). Asn1528, Asn1587, and Asn1661 each carry an N-linked (GlcNAc...) asparagine glycan. Residues 1727-1747 (FLWDIMNYAVSAGLVVGIFIG) form a helical membrane-spanning segment. The Cytoplasmic segment spans residues 1748–1758 (FQKKAYTSPDN). A helical transmembrane segment spans residues 1759–1779 (LPALVSLLMLYGWAVIPMMYP). Over 1780-1791 (ASFLFEVPSTAY) the chain is Extracellular. The helical transmembrane segment at 1792-1812 (VALSCANLFIGINSSAITFVL) threads the bilayer. The Cytoplasmic segment spans residues 1813-1830 (ELFENNRTLLRFNAMLRK). Residues 1831-1851 (LLIVFPHFCLGRGLIDLALSQ) form a helical membrane-spanning segment. Topologically, residues 1852 to 1872 (AVTDVYAQFGEEYSANPFQWD) are extracellular. Residues 1873–1893 (LIGKNLVAMAIEGVVYFLLTL) form a helical membrane-spanning segment. At 1894-2310 (LIQHHFFLTR…AEDKHTRSPQ (417 aa)) the chain is on the cytoplasmic side. The ABC transporter 2 domain occupies 1937–2169 (LKLNELTKVY…FGDGYIVTMK (233 aa)). ATP is bound by residues Asn1973, Gly1974, Lys1977, Thr1978, Thr1979, and Gly2072. Thr1978 contributes to the Mg(2+) binding site. The essential for ATP binding and ATPase activity stretch occupies residues 2243-2248 (VFVNFA). The tract at residues 2266 to 2310 (ASWQAKLEEKSGRLQTQEPLPAGSEQLANGSNPTAAEDKHTRSPQ) is disordered. The span at 2301–2310 (AEDKHTRSPQ) shows a compositional bias: basic and acidic residues.

It belongs to the ABC transporter superfamily. ABCA family. In terms of processing, N-glycosylated. Proteolytic cleavage by trypsin leads to a 120-kDa N-terminal fragment and a 115-kDa C-terminal fragment that are linked through disulfide bonds. Post-translationally, phosphorylation is independent of light exposure and modulates ATPase activity. Retinal-specific. Seems to be exclusively found in the rims of rod photoreceptor cells.

The protein resides in the membrane. It localises to the endoplasmic reticulum. Its subcellular location is the cell projection. The protein localises to the cilium. It is found in the photoreceptor outer segment. It carries out the reaction an N-all-trans-retinylidenephosphatidylethanolamine(out) + ATP + H2O = an N-all-trans-retinylidenephosphatidylethanolamine(in) + ADP + phosphate + H(+). The enzyme catalyses ATP + H2O + phospholipidSide 1 = ADP + phosphate + phospholipidSide 2.. The catalysed reaction is a 1,2-diacyl-sn-glycero-3-phosphoethanolamine(out) + ATP + H2O = a 1,2-diacyl-sn-glycero-3-phosphoethanolamine(in) + ADP + phosphate + H(+). It catalyses the reaction N-11-cis-retinylidenephosphatidylethanolamine(out) + ATP + H2O = N-11-cis-retinylidenephosphatidylethanolamine(in) + ADP + phosphate + H(+). It carries out the reaction ATP + H2O = ADP + phosphate + H(+). ATPase activity is decreased by cholesterol and ceramide. Phospholipids translocase activity is highly reduced by berylium fluoride and aluminum floride. N-ethylmaleimide inhibits phospholipid translocase activity. Its function is as follows. Flippase that catalyzes in an ATP-dependent manner the transport of retinal-phosphatidylethanolamine conjugates like the 11-cis and all-trans isomers of N-retinylidene-phosphatidylethanolamine from the lumen to the cytoplasmic leaflet of photoreceptor outer segment disk membranes, where N-cis-retinylidene-phosphatidylethanolamine (N-cis-R-PE) is then isomerized to its all-trans isomer (N-trans-R-PE) and reduced by RDH8 to produce all-trans-retinol (all-trans-rol) and therefore prevents the accumulation of excess of 11-cis-retinal and its schiff-base conjugate and the formation of toxic bisretinoid. Displays ATPase activity in vitro in absence of retinal substrate. May display GTPase activity that is strongly influenced by the lipid environment and the presence of retinoid compounds. Binds the unprotonated form of N-retinylidene-phosphatidylethanolamine with high affinity in the absence of ATP and ATP binding and hydrolysis induce a protein conformational change that causes the dissociation of N-retinylidene-phosphatidylethanolamine. The protein is Retinal-specific phospholipid-transporting ATPase ABCA4 of Mus musculus (Mouse).